The primary structure comprises 884 residues: Probable inorganic carbon transporter subunit DabA (884 aa).

Cys-390, Asp-392, His-582, and Cys-597 together coordinate Zn(2+).

It belongs to the inorganic carbon transporter (TC 9.A.2) DabA family. Forms a complex with DabB. Requires Zn(2+) as cofactor.

It localises to the cell membrane. Its function is as follows. Part of an energy-coupled inorganic carbon pump. This chain is Probable inorganic carbon transporter subunit DabA, found in Staphylococcus saprophyticus subsp. saprophyticus (strain ATCC 15305 / DSM 20229 / NCIMB 8711 / NCTC 7292 / S-41).